The primary structure comprises 165 residues: Small ribosomal subunit protein eS10 (165 aa).

The interval 92-165 (ATLRRSRPET…FGRGRGQAPQ (74 aa)) is disordered. Over residues 97–128 (SRPETGRPRPKGLEGERPPRLPRGETDRDTYR) the composition is skewed to basic and acidic residues. A compositionally biased stretch (low complexity) spans 142-153 (AGAGAATEFQFR). Over residues 154-165 (GGFGRGRGQAPQ) the composition is skewed to gly residues.

This sequence belongs to the eukaryotic ribosomal protein eS10 family. As to quaternary structure, component of the small ribosomal subunit.

The protein resides in the cytoplasm. Its subcellular location is the nucleus. It localises to the nucleolus. Component of the 40S ribosomal subunit. The ribosome is a large ribonucleoprotein complex responsible for the synthesis of proteins in the cell. This is Small ribosomal subunit protein eS10 (rps10) from Xenopus laevis (African clawed frog).